The chain runs to 357 residues: Uroporphyrinogen decarboxylase (357 aa).

Substrate contacts are provided by residues 30-34, Asp79, Tyr154, Ser209, and His336; that span reads RQAGR.

It belongs to the uroporphyrinogen decarboxylase family. In terms of assembly, homodimer.

Its subcellular location is the cytoplasm. It carries out the reaction uroporphyrinogen III + 4 H(+) = coproporphyrinogen III + 4 CO2. It participates in porphyrin-containing compound metabolism; protoporphyrin-IX biosynthesis; coproporphyrinogen-III from 5-aminolevulinate: step 4/4. Its function is as follows. Catalyzes the decarboxylation of four acetate groups of uroporphyrinogen-III to yield coproporphyrinogen-III. In Mycobacterium leprae (strain Br4923), this protein is Uroporphyrinogen decarboxylase.